Reading from the N-terminus, the 774-residue chain is Ion-translocating oxidoreductase complex subunit C (774 aa).

4Fe-4S ferredoxin-type domains lie at 368 to 398 (ELTS…QQLQ) and 408 to 437 (KCEE…VQYY). [4Fe-4S] cluster contacts are provided by C378, C381, C384, C388, C417, C420, C423, and C427. The segment covering 459-490 (ARFEEKKARMERDKAERENRFKQAAEDRRKEM) has biased composition (basic and acidic residues). Disordered stretches follow at residues 459-496 (ARFE…QGGS) and 533-774 (AKQA…EEKD). Residues 533-545 (AKQAEAAQSGASE) show a composition bias toward low complexity. The span at 550–572 (EMAKLREERKRQARERKAQKGEV) shows a compositional bias: basic and acidic residues. Over residues 605-618 (TESAAQPAQATPSS) the composition is skewed to low complexity. 4 stretches are compositionally biased toward polar residues: residues 645–658 (TEST…TPSS), 686–698 (ESAA…TPSS), 725–738 (TESA…TPSS), and 762–774 (QQSS…EEKD).

It belongs to the 4Fe4S bacterial-type ferredoxin family. RnfC subfamily. The complex is composed of six subunits: RnfA, RnfB, RnfC, RnfD, RnfE and RnfG. It depends on [4Fe-4S] cluster as a cofactor.

Its subcellular location is the cell inner membrane. Its function is as follows. Part of a membrane-bound complex that couples electron transfer with translocation of ions across the membrane. This chain is Ion-translocating oxidoreductase complex subunit C, found in Vibrio cholerae serotype O1 (strain ATCC 39315 / El Tor Inaba N16961).